Reading from the N-terminus, the 37-residue chain is Large ribosomal subunit protein bL36 (37 aa).

This sequence belongs to the bacterial ribosomal protein bL36 family.

This Synechococcus sp. (strain CC9311) protein is Large ribosomal subunit protein bL36.